The chain runs to 989 residues: DEAD-box ATP-dependent RNA helicase 45 (989 aa).

2 stretches are compositionally biased toward basic and acidic residues: residues 1 to 39 (MLEK…KRCD) and 64 to 101 (RDSK…EKEK). Disordered stretches follow at residues 1 to 248 (MLEK…AADE) and 305 to 330 (QGED…DDEE). Residues 88 to 182 (LKRDRERRER…ELKRQNEEAQ (95 aa)) adopt a coiled-coil conformation. Ser-119 is subject to Phosphoserine. The span at 134 to 179 (SRHGDDDVEKKTRDEQVEDEQKQLAEEVEKRRRRVQEWQELKRQNE) shows a compositional bias: basic and acidic residues. Ser-200 carries the post-translational modification Phosphoserine. Over residues 203 to 222 (EVKSDSEMDVDRDTKLENGG) the composition is skewed to basic and acidic residues. The span at 230–239 (ENETAVTVSE) shows a compositional bias: polar residues. The segment covering 321–330 (DPSLDEDDEE) has biased composition (acidic residues). Positions 396–424 (QFWHQTGLTSKILDTLKKLNYEKPMPIQA) match the Q motif motif. A Helicase ATP-binding domain is found at 427–605 (LPIIMSGRDC…RKVLNKPVEI (179 aa)). Residue 440–447 (AKTGSGKT) participates in ATP binding. The DEAD box signature appears at 553-556 (DEAD). A Helicase C-terminal domain is found at 590-748 (QVETLARKVL…PVPDDVKAVA (159 aa)).

Belongs to the DEAD box helicase family. DDX46/PRP5 subfamily.

It catalyses the reaction ATP + H2O = ADP + phosphate + H(+). The chain is DEAD-box ATP-dependent RNA helicase 45 (RH45) from Arabidopsis thaliana (Mouse-ear cress).